Consider the following 338-residue polypeptide: Phenylalanine--tRNA ligase alpha subunit (338 aa).

Glu252 provides a ligand contact to Mg(2+).

It belongs to the class-II aminoacyl-tRNA synthetase family. Phe-tRNA synthetase alpha subunit type 1 subfamily. Tetramer of two alpha and two beta subunits. The cofactor is Mg(2+).

The protein localises to the cytoplasm. It carries out the reaction tRNA(Phe) + L-phenylalanine + ATP = L-phenylalanyl-tRNA(Phe) + AMP + diphosphate + H(+). The sequence is that of Phenylalanine--tRNA ligase alpha subunit from Ectopseudomonas mendocina (strain ymp) (Pseudomonas mendocina).